Consider the following 190-residue polypeptide: Shikimate kinase (190 aa).

22–27 is a binding site for ATP; that stretch reads GSGKST. Mg(2+) is bound at residue Ser26. Positions 44, 68, and 90 each coordinate substrate. Arg127 is an ATP binding site. Position 146 (Arg146) interacts with substrate.

It belongs to the shikimate kinase family. In terms of assembly, monomer. Requires Mg(2+) as cofactor.

It localises to the cytoplasm. It catalyses the reaction shikimate + ATP = 3-phosphoshikimate + ADP + H(+). It functions in the pathway metabolic intermediate biosynthesis; chorismate biosynthesis; chorismate from D-erythrose 4-phosphate and phosphoenolpyruvate: step 5/7. Catalyzes the specific phosphorylation of the 3-hydroxyl group of shikimic acid using ATP as a cosubstrate. This is Shikimate kinase from Microcystis aeruginosa (strain NIES-843 / IAM M-2473).